The primary structure comprises 260 residues: Triosephosphate isomerase (260 aa).

11–13 (NWK) provides a ligand contact to substrate. The Electrophile role is filled by H103. E175 serves as the catalytic Proton acceptor. Substrate-binding positions include G181, S220, and 241 to 242 (GG).

Belongs to the triosephosphate isomerase family. In terms of assembly, homodimer.

Its subcellular location is the cytoplasm. It carries out the reaction D-glyceraldehyde 3-phosphate = dihydroxyacetone phosphate. Its pathway is carbohydrate biosynthesis; gluconeogenesis. It participates in carbohydrate degradation; glycolysis; D-glyceraldehyde 3-phosphate from glycerone phosphate: step 1/1. Its function is as follows. Involved in the gluconeogenesis. Catalyzes stereospecifically the conversion of dihydroxyacetone phosphate (DHAP) to D-glyceraldehyde-3-phosphate (G3P). This is Triosephosphate isomerase from Shewanella piezotolerans (strain WP3 / JCM 13877).